We begin with the raw amino-acid sequence, 837 residues long: Vacuolar membrane protease (837 aa).

The Cytoplasmic segment spans residues Met1–Lys36. Residues Thr37–Asp57 traverse the membrane as a helical segment. Residues Asn58–Arg355 lie on the Vacuolar side of the membrane. An N-linked (GlcNAc...) asparagine glycan is attached at Asn143. Positions 157 and 169 each coordinate Zn(2+). Glu201 (proton acceptor) is an active-site residue. 3 residues coordinate Zn(2+): Glu202, Glu227, and His299. A helical transmembrane segment spans residues Val356–Val376. The Cytoplasmic portion of the chain corresponds to Lys377–Arg384. Residues Val385 to Gly405 traverse the membrane as a helical segment. The Vacuolar segment spans residues Asn406–Met415. Residues Met416 to Val436 form a helical membrane-spanning segment. The Cytoplasmic portion of the chain corresponds to Asp437–Lys446. The chain crosses the membrane as a helical span at residues Leu447–Ser467. Over Gly468–Glu474 the chain is Vacuolar. The chain crosses the membrane as a helical span at residues Phe475–Trp495. Topologically, residues Thr496–Leu539 are cytoplasmic. A helical transmembrane segment spans residues Leu540–Val560. N-linked (GlcNAc...) asparagine glycosylation is present at Asn561. At Asn561–His572 the chain is on the vacuolar side. Residues Leu573–Ile593 traverse the membrane as a helical segment. Residues Thr594–Arg598 lie on the Cytoplasmic side of the membrane. The chain crosses the membrane as a helical span at residues Tyr599–His619. The Vacuolar segment spans residues Pro620–Val837. Asn689 carries N-linked (GlcNAc...) asparagine glycosylation.

Belongs to the peptidase M28 family. It depends on Zn(2+) as a cofactor.

It is found in the vacuole membrane. Its function is as follows. May be involved in vacuolar sorting and osmoregulation. The polypeptide is Vacuolar membrane protease (Candida albicans (strain WO-1) (Yeast)).